The chain runs to 298 residues: Protoheme IX farnesyltransferase (298 aa).

Transmembrane regions (helical) follow at residues 16 to 36 (VVAL…PDMP), 45 to 65 (ALGF…NQLL), 93 to 113 (VFAG…VNVI), 114 to 134 (TAVL…VYLK), 141 to 161 (IVIG…AVTG), 172 to 192 (SLLV…LAIF), 223 to 243 (VLLA…VFYL), 244 to 264 (GGAI…LNPP), and 277 to 297 (IVYL…LPWV).

It belongs to the UbiA prenyltransferase family. Protoheme IX farnesyltransferase subfamily.

It is found in the cell inner membrane. The enzyme catalyses heme b + (2E,6E)-farnesyl diphosphate + H2O = Fe(II)-heme o + diphosphate. It functions in the pathway porphyrin-containing compound metabolism; heme O biosynthesis; heme O from protoheme: step 1/1. Converts heme B (protoheme IX) to heme O by substitution of the vinyl group on carbon 2 of heme B porphyrin ring with a hydroxyethyl farnesyl side group. This Xanthomonas euvesicatoria pv. vesicatoria (strain 85-10) (Xanthomonas campestris pv. vesicatoria) protein is Protoheme IX farnesyltransferase.